Reading from the N-terminus, the 116-residue chain is Large ribosomal subunit protein uL18 (116 aa).

The protein belongs to the universal ribosomal protein uL18 family. As to quaternary structure, part of the 50S ribosomal subunit; part of the 5S rRNA/L5/L18/L25 subcomplex. Contacts the 5S and 23S rRNAs.

Functionally, this is one of the proteins that bind and probably mediate the attachment of the 5S RNA into the large ribosomal subunit, where it forms part of the central protuberance. This Saccharophagus degradans (strain 2-40 / ATCC 43961 / DSM 17024) protein is Large ribosomal subunit protein uL18.